Reading from the N-terminus, the 273-residue chain is Undecaprenyl-diphosphatase (273 aa).

7 consecutive transmembrane segments (helical) span residues 13–35, 45–62, 82–102, 108–128, 186–206, 219–239, and 250–270; these read GLVE…VFGN, VFEI…VFEY, FVLN…LFDK, LFNP…ILWV, TEFS…YDVL, LILI…KALL, and FAYY…SGWI.

This sequence belongs to the UppP family.

The protein localises to the cell inner membrane. It carries out the reaction di-trans,octa-cis-undecaprenyl diphosphate + H2O = di-trans,octa-cis-undecaprenyl phosphate + phosphate + H(+). Catalyzes the dephosphorylation of undecaprenyl diphosphate (UPP). Confers resistance to bacitracin. The polypeptide is Undecaprenyl-diphosphatase (Neisseria gonorrhoeae (strain ATCC 700825 / FA 1090)).